Reading from the N-terminus, the 392-residue chain is tRNA-specific 2-thiouridylase MnmA (392 aa).

ATP is bound by residues G18–S25 and M44. An interaction with target base in tRNA region spans residues N104–D106. C109 functions as the Nucleophile in the catalytic mechanism. The cysteines at positions 109 and 208 are disulfide-linked. An ATP-binding site is contributed by G133. The interaction with tRNA stretch occupies residues K158–Q160. The active-site Cysteine persulfide intermediate is C208. Residues R320–Y321 form an interaction with tRNA region.

This sequence belongs to the MnmA/TRMU family.

It is found in the cytoplasm. It catalyses the reaction S-sulfanyl-L-cysteinyl-[protein] + uridine(34) in tRNA + AH2 + ATP = 2-thiouridine(34) in tRNA + L-cysteinyl-[protein] + A + AMP + diphosphate + H(+). In terms of biological role, catalyzes the 2-thiolation of uridine at the wobble position (U34) of tRNA, leading to the formation of s(2)U34. This is tRNA-specific 2-thiouridylase MnmA from Marinobacter nauticus (strain ATCC 700491 / DSM 11845 / VT8) (Marinobacter aquaeolei).